The chain runs to 503 residues: Nuclear respiratory factor 1 (503 aa).

The interval 1 to 78 (MEEHGVTQTE…AHLAAAGPVG (78 aa)) is dimerization. The segment at 36 to 57 (SMLSADEDSPSSPEDTSYDDSD) is disordered. Phosphoserine; by CK2 is present on residues S39, S44, S46, S47, and S52. The Nuclear localization signal motif lies at 88–116 (GKKRKRPHVFESNPSIRKRQQTRLLRKLR). Residues 109-305 (TRLLRKLRAT…SIAHLVPSQT (197 aa)) mediate DNA binding. Residue K139 forms a Glycyl lysine isopeptide (Lys-Gly) (interchain with G-Cter in SUMO2) linkage. Residues 301-476 (VPSQTVVQTF…AQGNGPVQVA (176 aa)) form a required for transcriptional activation region.

Belongs to the NRF1/Ewg family. Homodimer. Binds DNA as a dimer. Interacts with PPRC1. Post-translationally, phosphorylation enhances DNA binding. In terms of tissue distribution, widely expressed in embryonic, fetal, and adult tissues.

It is found in the nucleus. Its function is as follows. Transcription factor that activates the expression of the EIF2S1 (EIF2-alpha) gene. Links the transcriptional modulation of key metabolic genes to cellular growth and development. Implicated in the control of nuclear genes required for respiration, heme biosynthesis, and mitochondrial DNA transcription and replication. The sequence is that of Nuclear respiratory factor 1 (Nrf1) from Mus musculus (Mouse).